The following is a 374-amino-acid chain: MKFELQTTDGQARRGRLIFERGVVETPAFMPVGTYGTVKGMTPEEVKETGAQILLGNTFHLWLRPGQEIMKLHGDLHGFMQWHGPILTDSGGFQVFSLGAMRKIKEEGVHFRNPINGTPVFLSPEKSMEIQYDLGSDIVMIFDECTPYPADWDYAKRSMEMSLRWAARSRKRFDELQNKNALFGIIQGSIYEDLRDISVKGLVEIGFDGYAVGGLAVGEPKEDMHRILEHVCPQIPQDKPRYLMGVGKPEDLVEGVRRGIDMFDCVMPTRNARNGHLFVTHGVIKIRNAKHKEDTSPLDEQCDCYTCRNYSRAYLHHLDRCNEILGARLNTIHNLRYYQRLMAKIRQAIEEGNLEQFVEDFYQRIGKPVPALSI.

The active-site Proton acceptor is the D89. Substrate-binding positions include 89-93, D143, Q187, and G214; that span reads DSGGF. An RNA binding region spans residues 245 to 251; that stretch reads GVGKPED. D264 functions as the Nucleophile in the catalytic mechanism. Positions 269–273 are RNA binding; important for wobble base 34 recognition; the sequence is TRNAR. Residues C302, C304, C307, and H333 each contribute to the Zn(2+) site.

This sequence belongs to the queuine tRNA-ribosyltransferase family. In terms of assembly, homodimer. Within each dimer, one monomer is responsible for RNA recognition and catalysis, while the other monomer binds to the replacement base PreQ1. The cofactor is Zn(2+).

It carries out the reaction 7-aminomethyl-7-carbaguanine + guanosine(34) in tRNA = 7-aminomethyl-7-carbaguanosine(34) in tRNA + guanine. It functions in the pathway tRNA modification; tRNA-queuosine biosynthesis. In terms of biological role, catalyzes the base-exchange of a guanine (G) residue with the queuine precursor 7-aminomethyl-7-deazaguanine (PreQ1) at position 34 (anticodon wobble position) in tRNAs with GU(N) anticodons (tRNA-Asp, -Asn, -His and -Tyr). Catalysis occurs through a double-displacement mechanism. The nucleophile active site attacks the C1' of nucleotide 34 to detach the guanine base from the RNA, forming a covalent enzyme-RNA intermediate. The proton acceptor active site deprotonates the incoming PreQ1, allowing a nucleophilic attack on the C1' of the ribose to form the product. After dissociation, two additional enzymatic reactions on the tRNA convert PreQ1 to queuine (Q), resulting in the hypermodified nucleoside queuosine (7-(((4,5-cis-dihydroxy-2-cyclopenten-1-yl)amino)methyl)-7-deazaguanosine). The chain is Queuine tRNA-ribosyltransferase from Photorhabdus laumondii subsp. laumondii (strain DSM 15139 / CIP 105565 / TT01) (Photorhabdus luminescens subsp. laumondii).